The primary structure comprises 156 residues: MSSHVVSLTEELVTPILEEKNLELVDIEYVKEGKNWFLRVYIDKEGGIDIMECGEVSELLSEKLDESDPITEAYFLEVSSPGVERPLKKKEDFDASIGKNIFVKLYEPIDGSKEYEGTLQSFDGETVTMEYKVKTRKKQVEIPYSKIAKARIAVTF.

This sequence belongs to the RimP family.

Its subcellular location is the cytoplasm. In terms of biological role, required for maturation of 30S ribosomal subunits. This Oceanobacillus iheyensis (strain DSM 14371 / CIP 107618 / JCM 11309 / KCTC 3954 / HTE831) protein is Ribosome maturation factor RimP.